The chain runs to 142 residues: Large ribosomal subunit protein uL11 (142 aa).

This sequence belongs to the universal ribosomal protein uL11 family. Part of the ribosomal stalk of the 50S ribosomal subunit. Interacts with L10 and the large rRNA to form the base of the stalk. L10 forms an elongated spine to which L12 dimers bind in a sequential fashion forming a multimeric L10(L12)X complex. Post-translationally, one or more lysine residues are methylated.

In terms of biological role, forms part of the ribosomal stalk which helps the ribosome interact with GTP-bound translation factors. The sequence is that of Large ribosomal subunit protein uL11 from Xylella fastidiosa (strain Temecula1 / ATCC 700964).